The sequence spans 550 residues: Chaperonin GroEL 1 (550 aa).

ATP-binding positions include 29-32 (TIGP), 86-90 (DGTTT), glycine 413, 477-479 (NAA), and aspartate 493. Residues 524–550 (AVSDGDHGHSHGHGHSHGHSHPQGPGF) form a disordered region. Over residues 533 to 543 (SHGHGHSHGHS) the composition is skewed to basic residues.

This sequence belongs to the chaperonin (HSP60) family. Forms a cylinder of 14 subunits composed of two heptameric rings stacked back-to-back. Interacts with the co-chaperonin GroES.

It localises to the cytoplasm. The enzyme catalyses ATP + H2O + a folded polypeptide = ADP + phosphate + an unfolded polypeptide.. In terms of biological role, together with its co-chaperonin GroES, plays an essential role in assisting protein folding. The GroEL-GroES system forms a nano-cage that allows encapsulation of the non-native substrate proteins and provides a physical environment optimized to promote and accelerate protein folding. The chain is Chaperonin GroEL 1 from Frankia alni (strain DSM 45986 / CECT 9034 / ACN14a).